An 88-amino-acid chain; its full sequence is UPF0297 protein BcerKBAB4_4234 (88 aa).

The protein belongs to the UPF0297 family.

The polypeptide is UPF0297 protein BcerKBAB4_4234 (Bacillus mycoides (strain KBAB4) (Bacillus weihenstephanensis)).